The primary structure comprises 569 residues: Peroxynitrite isomerase THAP4 (569 aa).

A THAP-type zinc finger spans residues 1–85; the sequence is MVICCAAVNC…LKPTAVPSIF (85 aa). A disordered region spans residues 88–216; it reads SEKKRGAGGH…DKSGISMDDF (129 aa). Composition is skewed to polar residues over residues 121 to 130 and 157 to 167; these read IGSSLSSSDN and AVSQEQGQSLE. At serine 159 the chain carries Phosphoserine. Residues 230–233 carry the HCFC1-binding motif (HBM) motif; that stretch reads LHSY. Serine 234 bears the Phosphoserine mark. A disordered region spans residues 235-312; sequence FSSKHTRERP…EAVQSEHSDA (78 aa). Basic and acidic residues predominate over residues 242-262; it reads ERPSVPREPMDRKRLKREMEP. Over residues 265-279 the composition is skewed to polar residues; it reads SGNSVAQSPPSSSLT. Residues 280–289 are compositionally biased toward low complexity; sequence ATPQKASQSP. Residues 407-569 are nitrobindin; sequence PPKLNPVVEP…LHITYKKVTP (163 aa). Residues threonine 436 and histidine 559 each coordinate heme b.

The protein in the C-terminal section; belongs to the nitrobindin family. Homodimer. It depends on heme b as a cofactor.

It is found in the cytoplasm. The protein localises to the nucleus. It catalyses the reaction peroxynitrite = nitrate. Its pathway is nitrogen metabolism. In terms of biological role, heme-binding protein able to scavenge peroxynitrite and to protect free L-tyrosine against peroxynitrite-mediated nitration, by acting as a peroxynitrite isomerase that converts peroxynitrite to nitrate. Therefore, this protein likely plays a role in peroxynitrite sensing and in the detoxification of reactive nitrogen and oxygen species (RNS and ROS, respectively). Is able to bind nitric oxide (NO) in vitro, but may act as a sensor of peroxynitrite levels in vivo, possibly modulating the transcriptional activity residing in the N-terminal region. This chain is Peroxynitrite isomerase THAP4, found in Mus musculus (Mouse).